A 478-amino-acid chain; its full sequence is UDP-N-acetylmuramate--L-alanine ligase (478 aa).

120 to 126 (GSHGKTT) contributes to the ATP binding site.

Belongs to the MurCDEF family.

The protein localises to the cytoplasm. The catalysed reaction is UDP-N-acetyl-alpha-D-muramate + L-alanine + ATP = UDP-N-acetyl-alpha-D-muramoyl-L-alanine + ADP + phosphate + H(+). Its pathway is cell wall biogenesis; peptidoglycan biosynthesis. Its function is as follows. Cell wall formation. This chain is UDP-N-acetylmuramate--L-alanine ligase, found in Rickettsia felis (strain ATCC VR-1525 / URRWXCal2) (Rickettsia azadi).